Reading from the N-terminus, the 95-residue chain is MPGRTPTYKLPPLPRLKVKKPVIKQEANRCLVLMSNLLQCWSSNGHMNPVCEKLATDLKACTSQNVMGSNQKPRKSTINYHAARLYDRISGKPHD.

One can recognise a CHCH domain in the interval Ala-27–Ser-69. Short sequence motifs (cx9C motif) lie at residues Cys-30–Cys-40 and Cys-51–Cys-61. Intrachain disulfides connect Cys-30–Cys-61 and Cys-40–Cys-51.

This sequence belongs to the mitochondrion-specific ribosomal protein mS37 family. Component of the mitochondrial small ribosomal subunit.

It localises to the mitochondrion. In terms of biological role, involved in mitochondrial genome encoded proteins translation. This is Small ribosomal subunit protein mS37 (MRP10) from Eremothecium gossypii (strain ATCC 10895 / CBS 109.51 / FGSC 9923 / NRRL Y-1056) (Yeast).